We begin with the raw amino-acid sequence, 555 residues long: Potassium-transporting ATPase potassium-binding subunit (555 aa).

The next 10 helical transmembrane spans lie at Ile-2–Ile-22, Gln-60–Phe-80, Ile-130–Phe-150, Val-173–Thr-193, Met-246–Tyr-266, Ile-278–Glu-298, Ala-374–Val-394, Leu-412–Leu-432, Leu-483–Leu-503, and Gly-525–Leu-545.

This sequence belongs to the KdpA family. The system is composed of three essential subunits: KdpA, KdpB and KdpC.

It localises to the cell membrane. Part of the high-affinity ATP-driven potassium transport (or Kdp) system, which catalyzes the hydrolysis of ATP coupled with the electrogenic transport of potassium into the cytoplasm. This subunit binds the extracellular potassium ions and delivers the ions to the membrane domain of KdpB through an intramembrane tunnel. This is Potassium-transporting ATPase potassium-binding subunit from Bacillus cereus (strain ZK / E33L).